The chain runs to 339 residues: Protein FAM50A (339 aa).

Positions 1–31 are disordered; the sequence is MAQYKGAASEAGRAMHLMKKREKQREQMEQM. The residue at position 2 (alanine 2) is an N-acetylalanine. A Glycyl lysine isopeptide (Lys-Gly) (interchain with G-Cter in SUMO2) cross-link involves residue lysine 100. Residues 121–177 are disordered; sequence SFTLEEEEEGGEEEEEAAMYEEEMEREEITTKKRKLGKNPDVDTSFLPDRDREEEEN. Residues 124–146 show a composition bias toward acidic residues; it reads LEEEEEGGEEEEEAAMYEEEMER. The Nuclear localization signal motif lies at 152 to 155; it reads KKRK. A compositionally biased stretch (basic and acidic residues) spans 168-177; it reads PDRDREEEEN.

Belongs to the FAM50 family. Interacts with EFTUD2, a component of the spliceosome U5 complex. Interacts with DDX41, a component of the spliceosome C complex. In terms of tissue distribution, widely expressed in fetal and adult tissues. Mostly abundant in fetal brain, liver and kidney; in the adult, high levels were also observed in heart, skeletal muscle, spleen, thymus, prostate and small intestine. Expressed in fetal cerebellum and hypothalamus. Low expression is observed in fetal temporal lobe.

The protein resides in the nucleus. Its function is as follows. Probably involved in the regulation of pre-mRNA splicing. The chain is Protein FAM50A (FAM50A) from Homo sapiens (Human).